Consider the following 234-residue polypeptide: Adenosine 5'-phosphosulfate reductase (234 aa).

4 residues coordinate [4Fe-4S] cluster: cysteine 120, cysteine 121, cysteine 203, and cysteine 206. Residue cysteine 229 is the Nucleophile; cysteine thiosulfonate intermediate of the active site.

The protein belongs to the PAPS reductase family. CysH subfamily. [4Fe-4S] cluster is required as a cofactor.

Its subcellular location is the cytoplasm. It carries out the reaction [thioredoxin]-disulfide + sulfite + AMP + 2 H(+) = adenosine 5'-phosphosulfate + [thioredoxin]-dithiol. It participates in sulfur metabolism; hydrogen sulfide biosynthesis; sulfite from sulfate. In terms of biological role, catalyzes the formation of sulfite from adenosine 5'-phosphosulfate (APS) using thioredoxin as an electron donor. The protein is Adenosine 5'-phosphosulfate reductase of Bacillus cereus (strain AH820).